The primary structure comprises 469 residues: Cytochrome P450 85A1 (469 aa).

Residues 1–21 (MVLVAIGVVVAAAVVVSSLLL) form a helical membrane-spanning segment. A heme-binding site is contributed by C419.

The protein belongs to the cytochrome P450 family. Heme serves as cofactor. In terms of tissue distribution, expressed at low levels in all the tissues, but preferentially in the leaf sheath.

It is found in the membrane. The enzyme catalyses 6-deoxoteasterone + reduced [NADPH--hemoprotein reductase] + O2 = 6alpha-hydroxyteasterone + oxidized [NADPH--hemoprotein reductase] + H2O + H(+). It catalyses the reaction 6alpha-hydroxytyphasterol + reduced [NADPH--hemoprotein reductase] + O2 = teasterone + oxidized [NADPH--hemoprotein reductase] + 2 H2O + H(+). The catalysed reaction is 3-dehydro-6-deoxoteasterone + reduced [NADPH--hemoprotein reductase] + O2 = 3-dehydro-6alpha-hydroxyteasterone + oxidized [NADPH--hemoprotein reductase] + H2O + H(+). It carries out the reaction 3-dehydro-6alpha-hydroxyteasterone + reduced [NADPH--hemoprotein reductase] + O2 = 3-dehydroteasterone + oxidized [NADPH--hemoprotein reductase] + 2 H2O + H(+). The enzyme catalyses 6-deoxotyphasterol + reduced [NADPH--hemoprotein reductase] + O2 = 6alpha-hydroxytyphasterol + oxidized [NADPH--hemoprotein reductase] + H2O + H(+). It catalyses the reaction 6alpha-hydroxytyphasterol + reduced [NADPH--hemoprotein reductase] + O2 = typhasterol + oxidized [NADPH--hemoprotein reductase] + 2 H2O + H(+). The catalysed reaction is 3-dehydro-6-deoxoteasterone + 2 reduced [NADPH--hemoprotein reductase] + 2 O2 = 3-dehydroteasterone + 2 oxidized [NADPH--hemoprotein reductase] + 3 H2O + 2 H(+). It carries out the reaction 6-deoxoteasterone + 2 reduced [NADPH--hemoprotein reductase] + 2 O2 = teasterone + 2 oxidized [NADPH--hemoprotein reductase] + 3 H2O + 2 H(+). The enzyme catalyses 6-deoxotyphasterol + 2 reduced [NADPH--hemoprotein reductase] + 2 O2 = typhasterol + 2 oxidized [NADPH--hemoprotein reductase] + 3 H2O + 2 H(+). It functions in the pathway plant hormone biosynthesis; brassinosteroid biosynthesis. In terms of biological role, catalyzes the C6-oxidation step in brassinosteroids biosynthesis. May convert 6-deoxoteasterone (6-deoxoTE) to teasterone (TE), 3-dehydro-6-deoxoteasterone (6-deoxo3DT, 6-deoxo3DHT) to 3-dehydroteasterone (3DT, 3-DHT), and 6-deoxotyphasterol (6-deoxoTY) to typhasterol (TY). Involved in the organization and elongation of the leaf and stem cells. Not able to convert 6-deoxocastasterone (6-deoxoCS) and castasterone (CS) to brassinolide (BL). The protein is Cytochrome P450 85A1 of Oryza sativa subsp. japonica (Rice).